Here is a 377-residue protein sequence, read N- to C-terminus: Nitric oxide reductase FlRd-NAD(+) reductase (377 aa).

The protein belongs to the FAD-dependent oxidoreductase family. Requires FAD as cofactor.

Its subcellular location is the cytoplasm. The enzyme catalyses 2 reduced [nitric oxide reductase rubredoxin domain] + NAD(+) + H(+) = 2 oxidized [nitric oxide reductase rubredoxin domain] + NADH. Its pathway is nitrogen metabolism; nitric oxide reduction. One of at least two accessory proteins for anaerobic nitric oxide (NO) reductase. Reduces the rubredoxin moiety of NO reductase. The protein is Nitric oxide reductase FlRd-NAD(+) reductase of Escherichia coli O9:H4 (strain HS).